Reading from the N-terminus, the 389-residue chain is Dirigent protein 25 (389 aa).

Residues 1–21 (MAGCKVLFFLILALAITFVSA) form the signal peptide. Composition is skewed to low complexity over residues 50–68 (GPFP…SGTG), 77–86 (LGTNTGPGPL), and 98–135 (SSGT…PLPT). The disordered stretch occupies residues 50 to 135 (GPFPTANSGP…PGSGSGPLPT (86 aa)).

It belongs to the plant dirigent protein family. Homodimer.

The protein localises to the secreted. It localises to the extracellular space. It is found in the apoplast. Functionally, dirigent proteins impart stereoselectivity on the phenoxy radical-coupling reaction, yielding optically active lignans from two molecules of coniferyl alcohol in the biosynthesis of lignans, flavonolignans, and alkaloids and thus plays a central role in plant secondary metabolism. This is Dirigent protein 25 (DIR25) from Arabidopsis thaliana (Mouse-ear cress).